The primary structure comprises 551 residues: MFS-type transporter ATEG_00331 (551 aa).

The first 18 residues, 1–18 (MKAWLLVSSLCLSTFIAA), serve as a signal peptide directing secretion. 4 consecutive transmembrane segments (helical) span residues 40-60 (LEFT…TPPW), 71-91 (PVLM…ALAI), 102-122 (IQGT…GDVF), and 132-152 (GVLG…GGAF). Asparagine 165 and asparagine 178 each carry an N-linked (GlcNAc...) asparagine glycan. Transmembrane regions (helical) follow at residues 179–199 (LTTS…FLEV), 206–228 (IIEG…TVMF), 233–255 (GYGG…FGIG), 324–344 (VYLL…GLYI), 354–374 (IYFG…LQPY), 380–400 (IIIF…APII), 417–437 (TVFF…GVIF), and 493–513 (SEWI…VFIS). Asparagine 524 is a glycosylation site (N-linked (GlcNAc...) asparagine).

The protein belongs to the major facilitator superfamily. TCR/Tet family.

It is found in the membrane. Its function is as follows. MFS-type transporter; part of the gene cluster that mediates the biosynthesis of isoflavipucine. This is MFS-type transporter ATEG_00331 from Aspergillus terreus (strain NIH 2624 / FGSC A1156).